Here is a 315-residue protein sequence, read N- to C-terminus: Olfactory receptor 4E1 (315 aa).

The Extracellular portion of the chain corresponds to 1 to 33; that stretch reads MEEAILLNQTSLVTYFRLRGLSVNHKARIAMFS. N8 carries N-linked (GlcNAc...) asparagine glycosylation. Residues 34 to 54 form a helical membrane-spanning segment; the sequence is MFLIFYVLTLIGNVLIVITII. At 55–61 the chain is on the cytoplasmic side; it reads YDHRLHT. Residues 62–82 form a helical membrane-spanning segment; the sequence is PMYFFLSNLSFIDVCHSTVTV. At 83–101 the chain is on the extracellular side; the sequence is PKMLRDVWSEEKLISFDAC. An intrachain disulfide couples C101 to C183. Residues 102 to 122 form a helical membrane-spanning segment; that stretch reads VTQMFFLHLFACTEIFLLTVM. The Cytoplasmic portion of the chain corresponds to 123-143; it reads AYDRYVAICKPLQYMIVMNWK. The chain crosses the membrane as a helical span at residues 144 to 164; it reads VCVLLAVALWTGGTIHSIALT. Residues 165–208 lie on the Extracellular side of the membrane; that stretch reads SLTIKLPYCGPDEIDNFFCDVPQVIKLACIDTHVIEILIVSNSG. Residues 209 to 229 form a helical membrane-spanning segment; it reads LISVVCFVVLVVSYAVILVSL. Residues 230–240 lie on the Cytoplasmic side of the membrane; sequence RQQISKGKRKA. The chain crosses the membrane as a helical span at residues 241 to 261; the sequence is LSTCAAHLTVVTLFLGHCIFI. At 262 to 272 the chain is on the extracellular side; the sequence is YSRPSTSLPED. The helical transmembrane segment at 273-293 threads the bilayer; the sequence is KVVSVFFTAVTPLLNPIIYTL. Over 294-315 the chain is Cytoplasmic; sequence RNEEMKSALNKLVGRKERKEEK.

The protein belongs to the G-protein coupled receptor 1 family.

It localises to the cell membrane. Functionally, odorant receptor. The sequence is that of Olfactory receptor 4E1 (OR4E1) from Homo sapiens (Human).